The primary structure comprises 61 residues: Prophage outer membrane lipoprotein RzoR (61 aa).

Positions 1–19 are cleaved as a signal peptide; it reads MRKLKMMLCVMMLPLVVVG. Cys-20 is lipidated: N-palmitoyl cysteine. The S-diacylglycerol cysteine moiety is linked to residue Cys-20.

Belongs to the lambdalikevirus o-spanin family. As to quaternary structure, homodimer; disulfide-linked. Interacts (via C-terminus) with RZ (via C-terminus). Part of the spanin complex which spans the entire periplasmic space. The spanin complex is composed of spanin, inner membrane subunit and spanin, outer membrane subunit.

It is found in the cell outer membrane. Functionally, component of the spanin complex that disrupts the outer membrane and causes cell lysis during virus exit. The spanin complex conducts the final step in cell lysis by disrupting the outer membrane after holin and endolysin action have permeabilized the inner membrane and degraded the host peptidoglycans. This Escherichia coli (strain K12) protein is Prophage outer membrane lipoprotein RzoR (rzoR).